The primary structure comprises 816 residues: H(+)/Cl(-) exchange transporter 5 (816 aa).

The interval 1–28 (MAMWQGAMDNRGFQQGSFNSFQSSSSDE) is disordered. The Cytoplasmic portion of the chain corresponds to 1 to 124 (MAMWQGAMDN…WALIHSVSDA (124 aa)). A compositionally biased stretch (low complexity) spans 12 to 25 (GFQQGSFNSFQSSS). 2 consecutive transmembrane segments (helical) span residues 125 to 162 (FSGW…ICTE) and 208 to 231 (VNYF…VKVF). A Selectivity filter part_1 motif is present at residues 237–241 (GSGIP). S238 is a chloride binding site. An intramembrane region (helical) is located at residues 240–247 (IPEIKTIL). 2 consecutive transmembrane segments (helical) span residues 256-275 (LGKW…VSSG) and 281-300 (EGPL…HCFN). A Selectivity filter part_2 motif is present at residues 279-283 (GKEGP). 2 consecutive intramembrane regions (helical) follow at residues 312–324 (VLSA…VSVA) and 328–336 (PIGGVLFSL). The next 5 helical transmembrane spans lie at 348 to 366 (LWRS…RSIN), 389 to 414 (LVPF…IAWC), 422 to 442 (LGKY…ILAF), 498 to 518 (MWQL…TFGM), and 523 to 542 (GLFI…LGVG). Positions 523–527 (GLFIP) match the Selectivity filter part_3 motif. A chloride-binding site is contributed by F525. Positions 570 to 584 (GLYAMVGAAACLGGV) form an intramembrane region, helical. The segment at residues 585-587 (TRM) is an intramembrane region (note=Loop between two helices). Residues 588-599 (TVSLVVIMFELT) constitute an intramembrane region (helical). The segment at residues 600–604 (GGLEY) is an intramembrane region (note=Loop between two helices). A helical transmembrane segment spans residues 605 to 622 (IVPLMAAAMTSKWVADAL). The Cytoplasmic segment spans residues 623 to 816 (GREGIYDAHI…NQDPDSILFN (194 aa)). Y628 lines the chloride pocket. 2 CBS domains span residues 656–720 (MKPR…ARKK) and 752–812 (ILDL…DPDS). ATP-binding positions include T666, 687 to 689 (YSG), and 794 to 797 (TKKD).

Belongs to the chloride channel (TC 2.A.49) family. ClC-5/CLCN5 subfamily. As to quaternary structure, interacts with NEDD4 and NEDD4L. Ubiquitinated by NEDD4L in the presence of albumin; which promotes endocytosis and proteasomal degradation.

It is found in the golgi apparatus membrane. It localises to the endosome membrane. The protein localises to the cell membrane. It catalyses the reaction 2 chloride(in) + H(+)(out) = 2 chloride(out) + H(+)(in). Proton-coupled chloride transporter. Functions as antiport system and exchanges chloride ions against protons. Important for normal acidification of the endosome lumen. May play an important role in renal tubular function. The CLC channel family contains both chloride channels and proton-coupled anion transporters that exchange chloride or another anion for protons. The absence of conserved gating glutamate residues is typical for family members that function as channels. The sequence is that of H(+)/Cl(-) exchange transporter 5 (CLCN5) from Sus scrofa (Pig).